The primary structure comprises 617 residues: UvrABC system protein C (617 aa).

Residues 11-85 (TTPGVYIFRK…IKQHRPHYNV (75 aa)) enclose the GIY-YIG domain. The region spanning 194–229 (APVIARLKEDMKVAAQGQDFEQAARLRDRVQAVEKL) is the UVR domain.

Belongs to the UvrC family. In terms of assembly, interacts with UvrB in an incision complex.

Its subcellular location is the cytoplasm. Its function is as follows. The UvrABC repair system catalyzes the recognition and processing of DNA lesions. UvrC both incises the 5' and 3' sides of the lesion. The N-terminal half is responsible for the 3' incision and the C-terminal half is responsible for the 5' incision. This is UvrABC system protein C from Deinococcus radiodurans (strain ATCC 13939 / DSM 20539 / JCM 16871 / CCUG 27074 / LMG 4051 / NBRC 15346 / NCIMB 9279 / VKM B-1422 / R1).